Consider the following 477-residue polypeptide: MEWEPVIGLEVHVQLRTQSKIFSGAATAYGAEPNTQACAIDLGLPGVLPVLNKEAVKLAVCFGLSVNASIPPYSIFARKNYFYPDLPKGYQISQYNFPIVQNGHLDIENEDGTTKRIGITRAHLEEDAGKSFHEGMQGYSGIDFNRAGTPLLEIVSEPDIRSAQEAVAYLKALHSLVRYIGVSDANMQEGAFRCDVNISLRPKSEEKFGTRAEIKNVNSFRFVERAILFEINRQKEILENGGTIVQETRLYDAVQDETRSMRTKEEAHDYRYFPDPDLLPVEIGPEFIEAVKNQLPELPWEKRKRFAASYQLSNYDVKLLTTQIEIANYFETVLKIDKTIPPKLAANWINGDLAAALNKNNLSITQSPINAEQLAGLLHRIADNTLSGSMGKQVFETMWGGEGDADTIIERHGLKQITDTEALEKIIDEVIENNPTQVEQYRSGKDKLIAFFVGQVMKATKGKANPQQVNELFKKKL.

It belongs to the GatB/GatE family. GatB subfamily. In terms of assembly, heterotrimer of A, B and C subunits.

It carries out the reaction L-glutamyl-tRNA(Gln) + L-glutamine + ATP + H2O = L-glutaminyl-tRNA(Gln) + L-glutamate + ADP + phosphate + H(+). It catalyses the reaction L-aspartyl-tRNA(Asn) + L-glutamine + ATP + H2O = L-asparaginyl-tRNA(Asn) + L-glutamate + ADP + phosphate + 2 H(+). Allows the formation of correctly charged Asn-tRNA(Asn) or Gln-tRNA(Gln) through the transamidation of misacylated Asp-tRNA(Asn) or Glu-tRNA(Gln) in organisms which lack either or both of asparaginyl-tRNA or glutaminyl-tRNA synthetases. The reaction takes place in the presence of glutamine and ATP through an activated phospho-Asp-tRNA(Asn) or phospho-Glu-tRNA(Gln). The chain is Aspartyl/glutamyl-tRNA(Asn/Gln) amidotransferase subunit B from Coxiella burnetii (strain RSA 493 / Nine Mile phase I).